A 388-amino-acid polypeptide reads, in one-letter code: WD repeat-containing protein 55 (388 aa).

Residues 1–20 (MDPTCEESPAEDSNNEEEDL) show a composition bias toward acidic residues. Residues 1 to 33 (MDPTCEESPAEDSNNEEEDLDSTKAAPRIRDTP) form a disordered region. WD repeat units lie at residues 37–76 (VLEA…GETK), 83–122 (HHLK…LERR), 126–164 (AHSA…PLMD), 167–206 (QHEE…FELL), 209–248 (PQSG…ATSD), 251–290 (ALRA…VVGT), and 293–333 (QHAG…TVVV). Ser355 carries the phosphoserine modification. The interval 364–388 (REDEEDAKAPEEVVRESDDDDDDSD) is disordered. A compositionally biased stretch (basic and acidic residues) spans 370-379 (AKAPEEVVRE).

The protein belongs to the WD repeat WDR55 family.

It is found in the nucleus. The protein resides in the nucleolus. Its subcellular location is the cytoplasm. In terms of biological role, nucleolar protein that acts as a modulator of rRNA synthesis. Plays a central role during organogenesis. This Mus musculus (Mouse) protein is WD repeat-containing protein 55 (Wdr55).